Reading from the N-terminus, the 352-residue chain is Replication factor C subunit 5 (352 aa).

The protein belongs to the activator 1 small subunits family. As to quaternary structure, heteropentamer of subunits rfc1, rfc2, rfc3, rfc4 and rfc5 that forms a complex with PCNA in the presence of ATP.

The protein resides in the nucleus. The elongation of primed DNA templates by DNA polymerase delta and epsilon requires the action of the accessory proteins proliferating cell nuclear antigen (PCNA) and activator 1. The sequence is that of Replication factor C subunit 5 from Neurospora crassa (strain ATCC 24698 / 74-OR23-1A / CBS 708.71 / DSM 1257 / FGSC 987).